A 516-amino-acid chain; its full sequence is Golgin-84 (516 aa).

Over 1-492 (MSSWITGLAD…TFLRRYPMMR (492 aa)) the chain is Cytoplasmic. The disordered stretch occupies residues 28 to 80 (QTENATGSADPMRRSMTSSTQSLSTSLKSTLSPVRRSGANSSSSVKSDGGVSV). A compositionally biased stretch (low complexity) spans 42-80 (SMTSSTQSLSTSLKSTLSPVRRSGANSSSSVKSDGGVSV). Ser64 and Ser74 each carry phosphoserine. Positions 108-423 (TNELAAFKIA…KAQTQLQQNM (316 aa)) form a coiled coil. The helical; Anchor for type IV membrane protein transmembrane segment at 493 to 513 (VSVIVYVALLHLWVMFVLLST) threads the bilayer. The Lumenal segment spans residues 514-516 (TPN).

The protein localises to the golgi apparatus membrane. Functionally, may be involved in maintaining Golgi structure and in intra-Golgi transport. This is Golgin-84 (Golgin84) from Drosophila melanogaster (Fruit fly).